A 46-amino-acid chain; its full sequence is Large ribosomal subunit protein bL34c (46 aa).

A disordered region spans residues 1 to 46 (MSKRTLEGSHRKKVRKSGFLSRSQSPTGRRILKARRKKGRKMLVKY). Positions 30–46 (RILKARRKKGRKMLVKY) are enriched in basic residues.

The protein belongs to the bacterial ribosomal protein bL34 family.

The protein localises to the plastid. It localises to the cyanelle. This is Large ribosomal subunit protein bL34c (rpl34) from Cyanophora paradoxa.